The chain runs to 888 residues: Collagen alpha chain (888 aa).

A disordered region spans residues 1-627 (APGPDGLTGT…GPPGQPGMSE (627 aa)). Residues 3-60 (GPDGLTGTKGSMGEPGTDGEPGSPGPQGAKGETGLAGRRGLTGIPGKQGRQGERGEPG) enclose the Collagen-like 1 domain. 2 stretches are compositionally biased toward low complexity: residues 59–73 (PGTAGSQGQQGQPGT) and 148–164 (TPGLPGMPGQQGPMGPI). Residues 179–190 (RGYDGKDGEPGR) show a composition bias toward basic and acidic residues. Positions 194–203 (PGPIGQPGIP) are enriched in low complexity. Residues 311–320 (SGPPGPPGPS) are compositionally biased toward pro residues. The span at 422–440 (SGSRGAQGPPGAPGSSGQN) shows a compositional bias: low complexity. Residues 441-450 (GVDGGTGENG) are compositionally biased toward gly residues. Composition is skewed to low complexity over residues 460 to 475 (ESGAPGDPGASGSAGP) and 508 to 518 (EPGPQGDQGPK). The region spanning 513-571 (GDQGPKGQKGEVGPVGEKGDKGWTGTPGDPGPQGDRGEPGPPGRDGVDGPPGPRGAPGE) is the Collagen-like 2 domain. A compositionally biased stretch (pro residues) spans 610–622 (PPGPPGPPGPPGQ). One can recognise a Fibrillar collagen NC1 domain in the interval 661–884 (ENVLKDLDEK…KLEIGPACFH (224 aa)). 2 cysteine pairs are disulfide-bonded: cysteine 731/cysteine 882 and cysteine 793/cysteine 833.

The protein belongs to the fibrillar collagen family. In terms of tissue distribution, component of the acid-insoluble organic matrix of the aragonitic skeleton (at protein level).

It localises to the secreted. In Acropora millepora (Staghorn coral), this protein is Collagen alpha chain.